Consider the following 124-residue polypeptide: UPF0231 protein Sputcn32_0682 (124 aa).

The protein belongs to the UPF0231 family.

This chain is UPF0231 protein Sputcn32_0682, found in Shewanella putrefaciens (strain CN-32 / ATCC BAA-453).